Consider the following 205-residue polypeptide: StAR-related lipid transfer protein 4 (205 aa).

An START domain is found at 1–205 (MEGLSDVASF…NFYGDLRKAL (205 aa)).

It carries out the reaction cholesterol(in) = cholesterol(out). Involved in the intracellular transport of cholesterol. Binds cholesterol or other sterols. This is StAR-related lipid transfer protein 4 (STARD4) from Homo sapiens (Human).